A 424-amino-acid polypeptide reads, in one-letter code: UDP-N-acetylglucosamine 1-carboxyvinyltransferase (424 aa).

A phosphoenolpyruvate-binding site is contributed by 22–23 (KN). UDP-N-acetyl-alpha-D-glucosamine is bound at residue Arg93. Catalysis depends on Cys117, which acts as the Proton donor. Cys117 is modified (2-(S-cysteinyl)pyruvic acid O-phosphothioketal). UDP-N-acetyl-alpha-D-glucosamine contacts are provided by residues 162-165 (KVSV), Asp307, and Ile329.

This sequence belongs to the EPSP synthase family. MurA subfamily.

It localises to the cytoplasm. The catalysed reaction is phosphoenolpyruvate + UDP-N-acetyl-alpha-D-glucosamine = UDP-N-acetyl-3-O-(1-carboxyvinyl)-alpha-D-glucosamine + phosphate. It functions in the pathway cell wall biogenesis; peptidoglycan biosynthesis. Its function is as follows. Cell wall formation. Adds enolpyruvyl to UDP-N-acetylglucosamine. This is UDP-N-acetylglucosamine 1-carboxyvinyltransferase from Actinobacillus pleuropneumoniae serotype 3 (strain JL03).